Reading from the N-terminus, the 227-residue chain is Esterase OVCA2 (227 aa).

Active-site charge relay system residues include serine 119, aspartate 179, and histidine 206.

The protein belongs to the LovG family.

It catalyses the reaction a carboxylic ester + H2O = an alcohol + a carboxylate + H(+). Functionally, exhibits ester hydrolase activity with a strong preference for long-chain alkyl ester substrates and high selectivity against a variety of short, branched, and substituted esters. Is able to hydrolyze ester bonds within a wide range of p-nitrophenyl derivatives (C2-C14) in vitro, with a strong preference toward substrates of &gt;8 carbons. In Bos taurus (Bovine), this protein is Esterase OVCA2 (OVCA2).